Here is a 919-residue protein sequence, read N- to C-terminus: Rho guanine nucleotide exchange factor 1 (919 aa).

One can recognise an RGSL domain in the interval 39–230 (DQNSQFQSLE…SLYMRHLGVR (192 aa)). Residues 247 to 402 (VMGNRRSDEP…PPGWRELVPS (156 aa)) form a disordered region. Over residues 281–310 (DCRHLKVEVDEKPGPADRKGSLGISSRDRT) the composition is skewed to basic and acidic residues. Residues 363–379 (STEDNGETESPEPGDDG) are compositionally biased toward acidic residues. Ser-372 carries the phosphoserine modification. The region spanning 414 to 603 (KRQEVISELL…REILHHVNQA (190 aa)) is the DH domain. The PH domain maps to 645–758 (KLVHEGPLTW…WCALITETAG (114 aa)). At Thr-693 the chain carries Phosphothreonine. The residue at position 736 (Tyr-736) is a Phosphotyrosine; by JAK2. Disordered stretches follow at residues 761-800 (KVPAPASRPKPRPSPSSTREPLLSSSENGTGGTEAAPADA) and 839-865 (TEEDSGAGPPRDGDGVPGGGAPGPTHT). Residues 775–787 (PSSTREPLLSSSE) are compositionally biased toward low complexity. Positions 864–893 (HTQEVEENLLSLEVVIKQLEELEEEFCRLR) form a coiled coil. Ser-904 is modified (phosphoserine).

In terms of assembly, interacts with RHOA, GNA12 and GNA13. Homooligomerizes through the coiled coil region. Interacts with CTNNAL1. May interact with CCPG1. Post-translationally, phosphorylated by PKCA. Angiotensin-2 induced Tyr-736 phosphorylation is mediated by JAK2.

It localises to the cytoplasm. Its subcellular location is the membrane. Seems to play a role in the regulation of RhoA GTPase by guanine nucleotide-binding alpha-12 (GNA12) and alpha-13 (GNA13) subunits. Acts as a GTPase-activating protein (GAP) for GNA12 and GNA13, and as guanine nucleotide exchange factor (GEF) for RhoA GTPase. Activated G alpha 13/GNA13 stimulates the RhoGEF activity through interaction with the RGS-like domain. This GEF activity is inhibited by binding to activated GNA12. Mediates angiotensin-2-induced RhoA activation. In lymphoid follicles, may trigger activation of GNA13 as part of S1PR2-dependent signaling pathway that leads to inhibition of germinal center (GC) B cell growth and migration outside the GC niche. This chain is Rho guanine nucleotide exchange factor 1 (Arhgef1), found in Rattus norvegicus (Rat).